Consider the following 251-residue polypeptide: Zwei Ig domain protein zig-3 (251 aa).

A signal peptide spans 1-19 (MLLICISVLAAISAHPLSS). Ig-like C2-type domains lie at 42 to 144 (PSLK…AKIS) and 160 to 244 (PVIT…TFLY). 2 cysteine pairs are disulfide-bonded: cysteine 65–cysteine 128 and cysteine 181–cysteine 228.

In terms of tissue distribution, expressed in PVT, AIM and ASI neurons, in vulva and weakly in body wall muscles.

The protein resides in the secreted. In terms of biological role, required for maintaining axon position of PVQ and PVP neurons postembryonically in the ventral nerve cord (VNC) by preventing axons drifting into the opposite side of the VNC that could occur during body growth and movement. The chain is Zwei Ig domain protein zig-3 from Caenorhabditis elegans.